Here is a 375-residue protein sequence, read N- to C-terminus: Alcohol dehydrogenase 1A (375 aa).

Ser2 is modified (N-acetylserine). Ser23 carries the phosphoserine modification. Position 47 (Cys47) interacts with Zn(2+). Residue 48 to 52 (GTDDH) participates in NAD(+) binding. The Zn(2+) site is built by His68, Cys98, Cys101, Cys104, Cys112, and Cys175. NAD(+) contacts are provided by residues 200–205 (GLGGVG), Asp224, Lys229, Ile270, 293–295 (VGV), 318–320 (AIL), and Arg370.

It belongs to the zinc-containing alcohol dehydrogenase family. Dimer of identical or heterodimer of closely related subunits alpha, beta, or gamma that are encoded by genes ADH1A, ADH1B, and ADH1C, respectively. It depends on Zn(2+) as a cofactor.

The protein resides in the cytoplasm. It carries out the reaction a primary alcohol + NAD(+) = an aldehyde + NADH + H(+). The enzyme catalyses a secondary alcohol + NAD(+) = a ketone + NADH + H(+). It catalyses the reaction butan-1-ol + NAD(+) = butanal + NADH + H(+). The catalysed reaction is 1-propanol + NAD(+) = propanal + NADH + H(+). Functionally, alcohol dehydrogenase. Oxidizes primary as well as secondary alcohols. Ethanol is a very poor substrate. The sequence is that of Alcohol dehydrogenase 1A (ADH1A) from Homo sapiens (Human).